A 495-amino-acid chain; its full sequence is Glycerol kinase (495 aa).

Threonine 11 is an ADP binding site. Positions 11, 12, and 13 each coordinate ATP. Threonine 11 contributes to the sn-glycerol 3-phosphate binding site. 4 residues coordinate sn-glycerol 3-phosphate: arginine 81, glutamate 82, tyrosine 133, and aspartate 242. 5 residues coordinate glycerol: arginine 81, glutamate 82, tyrosine 133, aspartate 242, and glutamine 243. 4 residues coordinate ADP: threonine 264, glycine 307, glycine 407, and asparagine 411. Threonine 264, glycine 307, and glycine 407 together coordinate ATP.

Belongs to the FGGY kinase family.

It carries out the reaction glycerol + ATP = sn-glycerol 3-phosphate + ADP + H(+). The protein operates within polyol metabolism; glycerol degradation via glycerol kinase pathway; sn-glycerol 3-phosphate from glycerol: step 1/1. With respect to regulation, inhibited by fructose 1,6-bisphosphate (FBP). Key enzyme in the regulation of glycerol uptake and metabolism. Catalyzes the phosphorylation of glycerol to yield sn-glycerol 3-phosphate. The sequence is that of Glycerol kinase from Thermus brockianus.